Consider the following 216-residue polypeptide: Outer-membrane lipoprotein LolB (216 aa).

Residues 1–21 (MLIFKICFYRLLPLSVLLLAA) form the signal peptide. A lipid anchor (N-palmitoyl cysteine) is attached at Cys22. A lipid anchor (S-diacylglycerol cysteine) is attached at Cys22.

The protein belongs to the LolB family. In terms of assembly, monomer.

It localises to the cell outer membrane. In terms of biological role, plays a critical role in the incorporation of lipoproteins in the outer membrane after they are released by the LolA protein. The protein is Outer-membrane lipoprotein LolB of Hamiltonella defensa subsp. Acyrthosiphon pisum (strain 5AT).